Consider the following 213-residue polypeptide: Large ribosomal subunit protein uL3 (213 aa).

N5-methylglutamine is present on Gln-151.

It belongs to the universal ribosomal protein uL3 family. As to quaternary structure, part of the 50S ribosomal subunit. Forms a cluster with proteins L14 and L19. In terms of processing, methylated by PrmB.

Its function is as follows. One of the primary rRNA binding proteins, it binds directly near the 3'-end of the 23S rRNA, where it nucleates assembly of the 50S subunit. The polypeptide is Large ribosomal subunit protein uL3 (Rhizobium etli (strain CIAT 652)).